The following is a 644-amino-acid chain: uncharacterized protein (644 aa).

A disordered region spans residues 123–644 (VSQQIQHDQH…AVGKKKPTKK (522 aa)). A compositionally biased stretch (low complexity) spans 133 to 155 (PQYNKHPQNNHHPQNTQHSQNNP). The span at 159–174 (NINESENKEDLSDRSS) shows a compositional bias: basic and acidic residues. Positions 175–191 (DSANSEESHNSQYSQDS) are enriched in polar residues. Residues 192–204 (GDSRNYQDSEDNK) show a composition bias toward basic and acidic residues. Residues 216 to 233 (NKLIVQRLTNPKITPDTI) are compositionally biased toward polar residues. Basic and acidic residues-rich tracts occupy residues 236-249 (SNKDSNKDLNKDLS) and 256-279 (SIKDKSKGPSKNLSKDSSKNKSKE). 2 stretches are compositionally biased toward acidic residues: residues 292–301 (DGDDLDDLGN) and 310–338 (SDYEDSDQDAISENPSDFDEDDSDDDDSN). Low complexity predominate over residues 367–400 (KSPSNSKKSKTNQKLSQSSKKISSKTITNSGSKS). The span at 447-476 (SDDSDNESDNESDNESNNDSDNETDSEIDD) shows a compositional bias: acidic residues. The span at 496–531 (PKTPMKPNNKTTSVSKPVSKPPVKSSIKNNTKNNKP) shows a compositional bias: low complexity. The span at 544-558 (KQKDQSESQSDKDID) shows a compositional bias: basic and acidic residues. Residues 585-594 (PPKSVSLPSS) are compositionally biased toward low complexity. Residues 607–630 (TAKTQNKSKSQPKTNGSKTSTKSI) are compositionally biased toward polar residues.

This is an uncharacterized protein from Acanthamoeba polyphaga mimivirus (APMV).